The sequence spans 425 residues: Histidine--tRNA ligase (425 aa).

The protein belongs to the class-II aminoacyl-tRNA synthetase family. As to quaternary structure, homodimer.

It localises to the cytoplasm. The catalysed reaction is tRNA(His) + L-histidine + ATP = L-histidyl-tRNA(His) + AMP + diphosphate + H(+). This is Histidine--tRNA ligase from Shewanella sp. (strain ANA-3).